The sequence spans 727 residues: 1,4-alpha-glucan branching enzyme GlgB (727 aa).

The active-site Nucleophile is the aspartate 411. The active-site Proton donor is the glutamate 464.

Belongs to the glycosyl hydrolase 13 family. GlgB subfamily. As to quaternary structure, monomer.

The enzyme catalyses Transfers a segment of a (1-&gt;4)-alpha-D-glucan chain to a primary hydroxy group in a similar glucan chain.. It participates in glycan biosynthesis; glycogen biosynthesis. Functionally, catalyzes the formation of the alpha-1,6-glucosidic linkages in glycogen by scission of a 1,4-alpha-linked oligosaccharide from growing alpha-1,4-glucan chains and the subsequent attachment of the oligosaccharide to the alpha-1,6 position. This Protochlamydia amoebophila (strain UWE25) protein is 1,4-alpha-glucan branching enzyme GlgB.